Consider the following 668-residue polypeptide: DNA ligase (668 aa).

Residues 37–41, 86–87, and E116 contribute to the NAD(+) site; these read DAVYD and SM. Catalysis depends on K118, which acts as the N6-AMP-lysine intermediate. NAD(+) contacts are provided by R139, E173, K288, and K312. C406, C409, C424, and C429 together coordinate Zn(2+). The BRCT domain maps to 590-668; sequence APDNFFKEKT…EQEAIAKIEK (79 aa).

It belongs to the NAD-dependent DNA ligase family. LigA subfamily. The cofactor is Mg(2+). Requires Mn(2+) as cofactor.

The enzyme catalyses NAD(+) + (deoxyribonucleotide)n-3'-hydroxyl + 5'-phospho-(deoxyribonucleotide)m = (deoxyribonucleotide)n+m + AMP + beta-nicotinamide D-nucleotide.. Its function is as follows. DNA ligase that catalyzes the formation of phosphodiester linkages between 5'-phosphoryl and 3'-hydroxyl groups in double-stranded DNA using NAD as a coenzyme and as the energy source for the reaction. It is essential for DNA replication and repair of damaged DNA. The protein is DNA ligase of Lactobacillus gasseri (strain ATCC 33323 / DSM 20243 / BCRC 14619 / CIP 102991 / JCM 1131 / KCTC 3163 / NCIMB 11718 / NCTC 13722 / AM63).